The sequence spans 73 residues: UPF0154 protein MYCGA5700 (73 aa).

Residues Leu5–Val25 form a helical membrane-spanning segment.

It belongs to the UPF0154 family.

The protein resides in the membrane. This Mycoplasmoides gallisepticum (strain R(low / passage 15 / clone 2)) (Mycoplasma gallisepticum) protein is UPF0154 protein MYCGA5700.